The sequence spans 240 residues: MIKVEKLSKSFGKHEVLKNISTTIAEGEVVAVIGPSGSGKSTFLRCLNLLEKPNGGTITIKDTEITKPKTNTLKVRENIGMVFQHFHLFPHKTVLENIMYAPVNVKKESKQAAQEKAEDLLRKVGLFEKRNDYPNRLSGGQKQRVAIARALAMNPDIMLFDEPTSALDPEMVKEVLQVMKELVETGMTMVIVTHEMGFAKEVADRVLFMDQGMIVEDGNPKEFFMSPKSKRAQDFLEKIL.

The 235-residue stretch at 2–236 (IKVEKLSKSF…PKSKRAQDFL (235 aa)) folds into the ABC transporter domain. ATP is bound at residue 34-41 (GPSGSGKS).

This sequence belongs to the ABC transporter superfamily.

The protein resides in the cell membrane. Functionally, part of a binding-protein-dependent transport system for arginine. Probably responsible for energy coupling to the transport system. The sequence is that of Arginine transport ATP-binding protein ArtM (artM) from Bacillus subtilis (strain 168).